Consider the following 477-residue polypeptide: Tripartite motif-containing protein 72 (477 aa).

Residues Cys14, Cys17, Cys29, His31, Cys34, Cys37, Cys53, Cys56, Cys86, His89, Cys97, Asp100, Cys105, Cys108, His114, and His117 each coordinate Zn(2+). The RING-type zinc-finger motif lies at 14–57 (CPLCLQLFDAPVTAECGHSFCRACLSRVAGEPAADGTVNCPCCQ). The segment at 81-122 (VPQGHCEEHLDPLSIYCEQDRVLVCGVCASLGSHRGHRLLPA) adopts a B box-type zinc-finger fold. Positions 135–232 (QQKLQLQEAS…EKVLEEVADK (98 aa)) form a coiled coil. At Ser255 the chain carries Phosphoserine. In terms of domain architecture, B30.2/SPRY spans 271–475 (DFKFQVWRKM…PLLLVGPDGQ (205 aa)).

The protein belongs to the TRIM/RBCC family. As to quaternary structure, homodimer. Homooligomer; disulfide-linked. Oligomerizes on the phospholipid membrane. Interacts with DYSF and CAV3. Post-translationally, disulfide bond formation at Cys-242 occurs in case of membrane damage that cause the entry of the oxidized milieu of the extracellular space, resulting in homooligomerization. Muscle-specific.

It localises to the cell membrane. The protein resides in the sarcolemma. The protein localises to the cytoplasmic vesicle membrane. The enzyme catalyses S-ubiquitinyl-[E2 ubiquitin-conjugating enzyme]-L-cysteine + [acceptor protein]-L-lysine = [E2 ubiquitin-conjugating enzyme]-L-cysteine + N(6)-ubiquitinyl-[acceptor protein]-L-lysine.. It functions in the pathway protein modification; protein ubiquitination. With respect to regulation, specifically binds phosphatidylserine. The binding to phospholipids enhances ubiquitination activity. Functionally, muscle-specific E3 ubiquitin-protein ligase that plays a central role in cell membrane repair by nucleating the assembly of the repair machinery at injury sites. Its ubiquitination activity is mediated by E2 ubiquitin-conjugating enzymes UBE2D1, UBE2D2 and UBE2D3. Acts as a sensor of oxidation: upon membrane damage, entry of extracellular oxidative environment results in disulfide bond formation and homooligomerization at the injury site. This oligomerization acts as a nucleation site for recruitment of TRIM72-containing vesicles to the injury site, leading to membrane patch formation. Probably acts upstream of the Ca(2+)-dependent membrane resealing process. Required for transport of DYSF to sites of cell injury during repair patch formation. Regulates membrane budding and exocytosis. May be involved in the regulation of the mobility of KCNB1-containing endocytic vesicles. This Oryctolagus cuniculus (Rabbit) protein is Tripartite motif-containing protein 72.